Here is a 102-residue protein sequence, read N- to C-terminus: Large ribosomal subunit protein bL21 (102 aa).

This sequence belongs to the bacterial ribosomal protein bL21 family. Part of the 50S ribosomal subunit. Contacts protein L20.

This protein binds to 23S rRNA in the presence of protein L20. In Staphylococcus haemolyticus (strain JCSC1435), this protein is Large ribosomal subunit protein bL21.